We begin with the raw amino-acid sequence, 168 residues long: Putative peroxiredoxin prxA (168 aa).

The region spanning 4–158 (LKAGDSFPAD…LEPAKNHLEF (155 aa)) is the Thioredoxin domain. C61 (cysteine sulfenic acid (-SOH) intermediate) is an active-site residue.

Belongs to the peroxiredoxin family. Prx5 subfamily. Homodimer; disulfide-linked, upon oxidation. Interacts with thioredoxin trxA.

The enzyme catalyses a hydroperoxide + [thioredoxin]-dithiol = an alcohol + [thioredoxin]-disulfide + H2O. Functionally, thiol-specific peroxidase that catalyzes the reduction of hydrogen peroxide and organic hydroperoxides to water and alcohols, respectively. Plays a role in cell protection against oxidative stress by detoxifying peroxides and as sensor of hydrogen peroxide-mediated signaling events. Involved in osmoadaptation. In Emericella nidulans (strain FGSC A4 / ATCC 38163 / CBS 112.46 / NRRL 194 / M139) (Aspergillus nidulans), this protein is Putative peroxiredoxin prxA.